The primary structure comprises 183 residues: Ribulose bisphosphate carboxylase small subunit, chloroplastic 3 (183 aa).

Residues 1–43 (MATTMLNRSVIVNKEVAKTPNFPRATKNNKGFASNAAVQKCRD) constitute a chloroplast transit peptide.

Belongs to the RuBisCO small chain family. In terms of assembly, heterohexadecamer of 8 large and 8 small subunits.

Its subcellular location is the plastid. It localises to the chloroplast. Functionally, ruBisCO catalyzes two reactions: the carboxylation of D-ribulose 1,5-bisphosphate, the primary event in carbon dioxide fixation, as well as the oxidative fragmentation of the pentose substrate. Both reactions occur simultaneously and in competition at the same active site. Although the small subunit is not catalytic it is essential for maximal activity. The sequence is that of Ribulose bisphosphate carboxylase small subunit, chloroplastic 3 from Acetabularia peniculus (Green alga).